Here is a 130-residue protein sequence, read N- to C-terminus: Small ribosomal subunit protein uS9 (130 aa).

Belongs to the universal ribosomal protein uS9 family.

This chain is Small ribosomal subunit protein uS9, found in Streptococcus uberis (strain ATCC BAA-854 / 0140J).